The sequence spans 218 residues: Tubulin polymerization-promoting protein (218 aa).

The tract at residues 1 to 45 (MADSKAKPTKAANKTPPKSPGDPAKAAKRLSLESEGANEGAAAAP) is disordered. The tract at residues 2–115 (ADSKAKPTKA…SCRTITFEQF (114 aa)) is mediates interaction with LIMK1. Position 15 is a phosphothreonine (Thr15). Ser19, Ser31, and Ser34 each carry phosphoserine. A compositionally biased stretch (low complexity) spans 33 to 45 (ESEGANEGAAAAP). Residues His60, His71, Cys79, and Cys82 each coordinate Zn(2+). Phosphothreonine is present on Thr91. Ser106 is subject to Phosphoserine. Ser151 carries an O-linked (GlcNAc) serine glycan. Phosphoserine is present on residues Ser158 and Ser159. The segment at 165-192 (LTDTSKFTGSHKERFDQSGKGKGKAGRV) is disordered. Basic and acidic residues predominate over residues 174-183 (SHKERFDQSG).

Belongs to the TPPP family. As to quaternary structure, homodimer. Binds tubulin; binding is inhibited by GTP. Interacts with MAPK1. Interacts with GAPDH; the interaction is direct. Interacts with LIMK1 (via the PDZ domain); the interaction is direct. Interacts with LIMK2. Interacts with HDAC6; thereby inhibiting the tubulin deacetylase activity of HDAC6. Interacts with aggregated SNCA; may have a pro-aggregatory role in synucleinopathies. Interacts with DYNLL1. Interacts (via C-terminus) with S100A2, S100A6 and S100B; these interactions inhibit TPPP dimerization. Mg(2+) serves as cofactor. In terms of processing, phosphorylated by LIMK1 on serine residues; phosphorylation may alter the tubulin polymerization activity. Phosphorylation by LIMK2, but not LIMK1, regulates astral microtubule organization at early stage of mitosis. Phosphorylation by ROCK1 at Ser-31, Ser-106 and Ser-158 inhibits interaction with HDAC6, resulting in decreased acetylation of tubulin, increased cell motility and entry into S-phase. Phosphorylation by CDK1 inhibits the microtubule polymerizing activity. Degraded by the proteasome; zinc-binding inhibits degradation by the proteasome. In terms of tissue distribution, predominantly expressed in mature oligodendrocytes.

It localises to the golgi outpost. The protein localises to the cytoplasm. The protein resides in the cytoskeleton. Its subcellular location is the microtubule organizing center. It is found in the nucleus. It localises to the spindle. The enzyme catalyses GTP + H2O = GDP + phosphate + H(+). In terms of biological role, regulator of microtubule dynamics that plays a key role in myelination by promoting elongation of the myelin sheath. Acts as a microtubule nucleation factor in oligodendrocytes: specifically localizes to the postsynaptic Golgi apparatus region, also named Golgi outpost, and promotes microtubule nucleation, an important step for elongation of the myelin sheath. Required for both uniform polarized growth of distal microtubules as well as directing the branching of proximal processes. Shows magnesium-dependent GTPase activity; the role of the GTPase activity is unclear. In addition to microtubule nucleation activity, also involved in microtubule bundling and stabilization of existing microtubules, thereby maintaining the integrity of the microtubule network. Regulates microtubule dynamics by promoting tubulin acetylation: acts by inhibiting the tubulin deacetylase activity of HDAC6. Also regulates cell migration: phosphorylation by ROCK1 inhibits interaction with HDAC6, resulting in decreased acetylation of tubulin and increased cell motility. Plays a role in cell proliferation by regulating the G1/S-phase transition. Involved in astral microtubule organization and mitotic spindle orientation during early stage of mitosis; this process is regulated by phosphorylation by LIMK2. The polypeptide is Tubulin polymerization-promoting protein (Rattus norvegicus (Rat)).